Consider the following 162-residue polypeptide: Gas vesicle protein I (162 aa).

Residues 1–162 form a disordered region; sequence MTGKQHQKHE…AERQRGGADE (162 aa). 2 stretches are compositionally biased toward basic and acidic residues: residues 22 to 37 and 47 to 64; these read INRD…QREK and RQSE…HDTQ. 2 stretches are compositionally biased toward polar residues: residues 65 to 74 and 81 to 110; these read SETQRGTQSK and TGGT…SHST. 2 stretches are compositionally biased toward basic and acidic residues: residues 122-142 and 151-162; these read ARER…EDKS and PKAERQRGGADE.

This sequence belongs to the gas vesicle GvpI family. GvpF to GvpM interact with each other in vitro, and may form multi-subunit complex(es). Interacts with GvpC and GvpO.

The protein resides in the gas vesicle. Proteins GvpF to GvpM might be involved in nucleating gas vesicle formation. A minor component of the gas vesicle. Gas vesicles are hollow, gas filled proteinaceous nanostructures found in some microorganisms. They allow positioning of halobacteria at the optimal depth for growth in the poorly aerated, shallow brine pools of their habitat. In terms of biological role, expression of a 9.5 kb mc-vac DNA fragment containing 2 divergently transcribed regions (gvpD-gvpE-gvpF-gvpG-gvpH-gvpI-gvpJ-gvpK-gvpL-gvpM and gvpA-gvpC-gvpN-gvpO) allows H.volcanii to produce gas vesicles. The sequence is that of Gas vesicle protein I from Haloferax mediterranei (strain ATCC 33500 / DSM 1411 / JCM 8866 / NBRC 14739 / NCIMB 2177 / R-4) (Halobacterium mediterranei).